Reading from the N-terminus, the 94-residue chain is DNA-directed RNA polymerase subunit omega (94 aa).

This sequence belongs to the RNA polymerase subunit omega family. As to quaternary structure, the RNAP catalytic core consists of 2 alpha, 1 beta, 1 beta' and 1 omega subunit. When a sigma factor is associated with the core the holoenzyme is formed, which can initiate transcription.

It catalyses the reaction RNA(n) + a ribonucleoside 5'-triphosphate = RNA(n+1) + diphosphate. In terms of biological role, promotes RNA polymerase assembly. Latches the N- and C-terminal regions of the beta' subunit thereby facilitating its interaction with the beta and alpha subunits. This chain is DNA-directed RNA polymerase subunit omega, found in Parafrankia sp. (strain EAN1pec).